The chain runs to 152 residues: Snaclec lebecin subunit alpha (152 aa).

An N-terminal signal peptide occupies residues 1–23 (MGRSISVSFGLLVVFLSLSGTGA). 3 cysteine pairs are disulfide-bonded: Cys-27/Cys-38, Cys-54/Cys-147, and Cys-122/Cys-139. The C-type lectin domain occupies 34-148 (YEGGCYYVFD…CELAYHFICS (115 aa)).

In terms of assembly, heterodimer with the beta subunit (AC W5XCJ6); disulfide-linked. Expressed by the venom gland.

It is found in the secreted. Its function is as follows. Inhibits human breast cancer cells (MDA-MB231) migration and proliferation, as well as their adhesion to fibrinogen and fibronectin. This inhibition may be due to the binding to receptors of the integrin family, probably alpha-v/beta-3 (ITGAV/ITGB3) (40% inhibition of cell adhesion) and alpha-5/beta-1 (ITGA5/ITGB1) (by comparison with lebectin). The sequence is that of Snaclec lebecin subunit alpha from Macrovipera lebetinus (Levantine viper).